The following is a 325-amino-acid chain: Heme A synthase (325 aa).

The next 5 membrane-spanning stretches (helical) occupy residues 6–26 (WLAV…FTRL), 88–108 (LVGR…FVVG), 116–136 (LRLC…WYMV), 155–175 (LFCA…PTVI), and 184–204 (LVGC…GLVA). Histidine 246 provides a ligand contact to heme. 3 helical membrane passes run 248–268 (MSAF…FFYD), 275–295 (VFLV…TLLF), and 297–317 (IPID…GICV). Heme is bound at residue histidine 305.

It belongs to the COX15/CtaA family. Type 2 subfamily. As to quaternary structure, interacts with CtaB. The cofactor is heme b.

It is found in the cell membrane. The enzyme catalyses Fe(II)-heme o + 2 A + H2O = Fe(II)-heme a + 2 AH2. It functions in the pathway porphyrin-containing compound metabolism; heme A biosynthesis; heme A from heme O: step 1/1. Catalyzes the conversion of heme O to heme A by two successive hydroxylations of the methyl group at C8. The first hydroxylation forms heme I, the second hydroxylation results in an unstable dihydroxymethyl group, which spontaneously dehydrates, resulting in the formyl group of heme A. This is Heme A synthase from Neorickettsia sennetsu (strain ATCC VR-367 / Miyayama) (Ehrlichia sennetsu).